The primary structure comprises 386 residues: Succinate--CoA ligase [ADP-forming] subunit beta (386 aa).

The ATP-grasp domain occupies 9–244; it reads KEILRKYGVP…HDEEDPLETR (236 aa). Residues Lys46, 53–55, Glu99, Cys102, and Glu107 contribute to the ATP site; that span reads GRG. Mg(2+)-binding residues include Asn199 and Asp213. Substrate is bound by residues Asn264 and 321-323; that span reads GIM.

It belongs to the succinate/malate CoA ligase beta subunit family. As to quaternary structure, heterotetramer of two alpha and two beta subunits. Requires Mg(2+) as cofactor.

It carries out the reaction succinate + ATP + CoA = succinyl-CoA + ADP + phosphate. The enzyme catalyses GTP + succinate + CoA = succinyl-CoA + GDP + phosphate. The protein operates within carbohydrate metabolism; tricarboxylic acid cycle; succinate from succinyl-CoA (ligase route): step 1/1. In terms of biological role, succinyl-CoA synthetase functions in the citric acid cycle (TCA), coupling the hydrolysis of succinyl-CoA to the synthesis of either ATP or GTP and thus represents the only step of substrate-level phosphorylation in the TCA. The beta subunit provides nucleotide specificity of the enzyme and binds the substrate succinate, while the binding sites for coenzyme A and phosphate are found in the alpha subunit. The protein is Succinate--CoA ligase [ADP-forming] subunit beta of Rickettsia massiliae (strain Mtu5).